A 108-amino-acid polypeptide reads, in one-letter code: Large ribosomal subunit protein uL23 (108 aa).

This sequence belongs to the universal ribosomal protein uL23 family. In terms of assembly, part of the 50S ribosomal subunit. Contacts protein L29, and trigger factor when it is bound to the ribosome.

Its function is as follows. One of the early assembly proteins it binds 23S rRNA. One of the proteins that surrounds the polypeptide exit tunnel on the outside of the ribosome. Forms the main docking site for trigger factor binding to the ribosome. This Polaromonas sp. (strain JS666 / ATCC BAA-500) protein is Large ribosomal subunit protein uL23.